The following is a 410-amino-acid chain: DNA primase small subunit (410 aa).

Residues E43, D106, and D108 contribute to the active site. The Zinc knuckle motif signature appears at 118 to 129 (CCKDATVCPKCW).

It belongs to the eukaryotic-type primase small subunit family. Heterodimer of a small subunit and a large subunit.

Functionally, DNA primase is the polymerase that synthesizes small RNA primers for the Okazaki fragments made during discontinuous DNA replication. The chain is DNA primase small subunit (pri-1) from Caenorhabditis elegans.